Reading from the N-terminus, the 172-residue chain is Ribosome maturation factor RimM (172 aa).

Residues 92–167 (ENEFYHSDLV…VILKLPEIIG (76 aa)) enclose the PRC barrel domain.

This sequence belongs to the RimM family. As to quaternary structure, binds ribosomal protein uS19.

The protein localises to the cytoplasm. Functionally, an accessory protein needed during the final step in the assembly of 30S ribosomal subunit, possibly for assembly of the head region. Essential for efficient processing of 16S rRNA. May be needed both before and after RbfA during the maturation of 16S rRNA. It has affinity for free ribosomal 30S subunits but not for 70S ribosomes. The sequence is that of Ribosome maturation factor RimM from Ehrlichia ruminantium (strain Gardel).